We begin with the raw amino-acid sequence, 4963 residues long: Kettin homolog (4963 aa).

3 Ig-like domains span residues 18–105 (PTFI…TCIL), 133–220 (PSAP…EAIS), and 303–392 (PIIR…ARIE). Disordered regions lie at residues 396–420 (LSVP…QQQQ), 466–501 (RRQL…EEER), 557–578 (IRPH…RQEV), 598–622 (QLYQ…QQRF), and 652–696 (TNGG…GHEH). 3 stretches are compositionally biased toward basic and acidic residues: residues 399–417 (PDER…RDRQ), 466–475 (RRQLEHEKRL), and 484–501 (FERE…EEER). The stretch at 401–517 (ERRKENQLRE…KHLRQQQQTQ (117 aa)) forms a coiled coil. A compositionally biased stretch (low complexity) spans 557 to 576 (IRPHQQQQQHYQQQQQSPRQ). The segment covering 658-685 (AANGSAKTANGSANGSANGSAVHAANGG) has biased composition (low complexity). Ig-like domains are found at residues 706 to 796 (PQFL…FSLN), 806 to 893 (PEFT…GRVV), 937 to 1027 (PKFE…ANIA), 1065 to 1155 (PNFH…ATII), 1199 to 1281 (FHCE…AELT), 1462 to 1554 (PKFL…ITVT), 1594 to 1687 (PPTF…ATIR), 1728 to 1819 (PAFV…VDIN), 1992 to 2085 (PPVF…IFLE), 2126 to 2217 (PTFT…CTVK), 2258 to 2350 (PKFV…ANFT), 2391 to 2481 (PQFI…AQLT), 2522 to 2613 (PKFV…GQLS), 2654 to 2745 (PSFV…ANVG), 2787 to 2878 (PQWV…ATVT), 2919 to 3010 (PNFL…ASIR), 3051 to 3141 (PAIT…ATLK), 3182 to 3273 (PRFI…ATIE), 3314 to 3407 (PAIV…FEVS), and 3448 to 3539 (PVFI…TKLT). Cysteines 827 and 877 form a disulfide. A disulfide bond links C1201 and C1265. C1618 and C1671 are joined by a disulfide. 2 disulfides stabilise this stretch: C2016/C2069 and C2148/C2201. A compositionally biased stretch (basic and acidic residues) spans 3567–3583 (EAPRPAREDAPDADHGP). A disordered region spans residues 3567 to 3590 (EAPRPAREDAPDADHGPPKFTSAL). Ig-like domains are found at residues 3584–3677 (PKFT…LKVV), 3720–3811 (PSFS…GKIA), 3821–3913 (PQVV…TKIT), 3962–4052 (PEFR…AKLA), and 4098–4185 (PQFT…ATLD). Intrachain disulfides connect C3606/C3659 and C3742/C3795. The segment at 4193–4963 (RQTKLRPANF…TSQAKLTLSR (771 aa)) is required for F-actin binding. The segment covering 4319–4329 (DQQEVGWERPD) has biased composition (basic and acidic residues). A disordered region spans residues 4319–4357 (DQQEVGWERPDWAGQDGTSKLPGADEGRFKKLPTPAPEL). Ig-like domains lie at 4546-4634 (PTIS…ANLT), 4645-4733 (PDFS…ARLN), 4752-4842 (PRFT…LVLT), and 4872-4960 (PHFI…AKLT).

As to quaternary structure, interacts (via Ig-like domains) with F-actin. In terms of tissue distribution, expressed in the pharyngeal, body wall, and anal depressor muscles. Expression in these muscles is higher in hermaphrodites than in males. Expressed in the vulva and the myoepithelial sheath of the proximal ovary. Expressed in the proximal gonad of males. Not expressed in the dense bodies of the obliquely striated body wall muscle.

The protein resides in the cytoplasm. It is found in the myofibril. It localises to the sarcomere. Its subcellular location is the cytoskeleton. Positively regulates actin filament organization and provides mechanical stability to the myofibrils during body wall muscle contraction. Required for the organization of sarcomeric actin filaments and myosin protein myo-3 in striated body wall muscle cells. Not required for assembly of dense bodies, which are a type of integrin-based adhesion structure that link the plasma membrane to thin filaments of myofibrils, in body wall muscle. Not required for the atn-1 protein to localize to the dense bodies. The sequence is that of Kettin homolog from Caenorhabditis elegans.